The sequence spans 208 residues: Small ribosomal subunit protein uS4 (208 aa).

The segment at 30-49 (EKRPYAPGEHGRDRRRTESD) is disordered. An S4 RNA-binding domain is found at 95-161 (TRLDNLVLRA…VPFQIAAEGV (67 aa)).

This sequence belongs to the universal ribosomal protein uS4 family. As to quaternary structure, part of the 30S ribosomal subunit. Contacts protein S5. The interaction surface between S4 and S5 is involved in control of translational fidelity.

Its function is as follows. One of the primary rRNA binding proteins, it binds directly to 16S rRNA where it nucleates assembly of the body of the 30S subunit. In terms of biological role, with S5 and S12 plays an important role in translational accuracy. The sequence is that of Small ribosomal subunit protein uS4 from Bifidobacterium longum (strain DJO10A).